Consider the following 177-residue polypeptide: 2-C-methyl-D-erythritol 2,4-cyclodiphosphate synthase (177 aa).

D23 and H25 together coordinate a divalent metal cation. 4-CDP-2-C-methyl-D-erythritol 2-phosphate contacts are provided by residues 23 to 25 and 49 to 50; these read DVH and HS. H57 lines the a divalent metal cation pocket. 4-CDP-2-C-methyl-D-erythritol 2-phosphate-binding positions include 71–73, 76–80, 115–121, and R157; these read DIG, FSDTD, and AQAPRMA.

It belongs to the IspF family. As to quaternary structure, homotrimer. It depends on a divalent metal cation as a cofactor.

The enzyme catalyses 4-CDP-2-C-methyl-D-erythritol 2-phosphate = 2-C-methyl-D-erythritol 2,4-cyclic diphosphate + CMP. It functions in the pathway isoprenoid biosynthesis; isopentenyl diphosphate biosynthesis via DXP pathway; isopentenyl diphosphate from 1-deoxy-D-xylulose 5-phosphate: step 4/6. Involved in the biosynthesis of isopentenyl diphosphate (IPP) and dimethylallyl diphosphate (DMAPP), two major building blocks of isoprenoid compounds. Catalyzes the conversion of 4-diphosphocytidyl-2-C-methyl-D-erythritol 2-phosphate (CDP-ME2P) to 2-C-methyl-D-erythritol 2,4-cyclodiphosphate (ME-CPP) with a corresponding release of cytidine 5-monophosphate (CMP). This chain is 2-C-methyl-D-erythritol 2,4-cyclodiphosphate synthase, found in Nitrosospira multiformis (strain ATCC 25196 / NCIMB 11849 / C 71).